Here is a 395-residue protein sequence, read N- to C-terminus: MMKNERRSVNWPMIAGVAAVAAAVGFGAAHLPVSEKSPASTQAPEAQKPQSAPVKPGLKEVKIPATYLAAANIAVEPVASAAVGTEILAPATVAALPGSEAVIVSRAAGAVQRVQRRLGDVVKAGDVLALVDSPEAAGMAAERKVAQAKADLARKTYEREASLFQQGVTPRQEMEAAKAALDVAQAEALRAATVAQSAHLASDGRSVAVVSPIAGKITAQSVTLGAFVAPQAELFRVAGTGAVQVEAAVTAADTSRIVAGSEATILLANGSPLSARVQAVTPTVTGSARVATVVVVPAQPTDRLVVGEGVQVRLRTAVADAAALSVPEDAVQNLDGRDVLFVRTQEGFRPMPVLVGTRSGGSAQILSGVQAGEQVATRNAFLVKAEMNKGGGDEE.

The chain crosses the membrane as a helical span at residues 13 to 33 (MIAGVAAVAAAVGFGAAHLPV). Residues 35 to 55 (EKSPASTQAPEAQKPQSAPVK) are disordered. Polar residues predominate over residues 37–50 (SPASTQAPEAQKPQ). The stretch at 140 to 193 (AAERKVAQAKADLARKTYEREASLFQQGVTPRQEMEAAKAALDVAQAEALRAAT) forms a coiled coil.

The protein belongs to the membrane fusion protein (MFP) (TC 8.A.1) family.

The protein resides in the cell inner membrane. Functionally, the products of the genes cnrA, cnrB, and cnrC are likely to form a membrane-bound protein complex catalyzing an energy-dependent efflux of Ni(2+) and Co(2+). The mechanism of action of the CnrCBA complex may be that of a proton/cation antiporter. In Cupriavidus metallidurans (strain ATCC 43123 / DSM 2839 / NBRC 102507 / CH34) (Ralstonia metallidurans), this protein is Nickel and cobalt resistance protein CnrB (cnrB).